A 622-amino-acid chain; its full sequence is Low affinity potassium transport system protein Kup (622 aa).

12 consecutive transmembrane segments (helical) span residues 9–29, 49–69, 103–123, 137–157, 165–185, 213–233, 247–267, 276–296, 337–357, 363–383, 396–416, and 419–439; these read LPAITLAAIGVVYGDIGTSPL, VFGFLSLIFWLLIFVVSIKYL, VIMGLIGGSFFYGEVVITPAI, PQLDTWIVPLSIIVLTLLFMI, VGKLFAPIMLTWFLILAVLGL, VSFIALGAVVLSITGVEALYA, WFTVVLPSLVLNYFGQGALLL, PFFLLAPDWALIPLLILAALA, IYIPFVNWLLYFAVVVVIVSF, LAAAYGIAVTGTMVLTSILST, FVALILIAFLCVDIPLFSANL, and LLSGGWLPLSLGLIMFTIMTT.

This sequence belongs to the HAK/KUP transporter (TC 2.A.72) family.

Its subcellular location is the cell inner membrane. The enzyme catalyses K(+)(in) + H(+)(in) = K(+)(out) + H(+)(out). Its function is as follows. Responsible for the low-affinity transport of potassium into the cell. Likely operates as a K(+):H(+) symporter. This chain is Low affinity potassium transport system protein Kup, found in Salmonella paratyphi B (strain ATCC BAA-1250 / SPB7).